Here is a 568-residue protein sequence, read N- to C-terminus: 4-hydroxy-7-methoxy-3-oxo-3,4-dihydro-2H-1,4-benzoxazin-2-yl glucoside beta-D-glucosidase, chloroplastic (568 aa).

The N-terminal 50 residues, 1–50, are a transit peptide targeting the chloroplast; sequence MALLVGGTLNPTTHLSLRSRAGRNSENVWLRSAASSQTSKGRFCNLTVRA. A beta-D-glucoside is bound by residues glutamine 92, histidine 194, and 239 to 240; that span reads NE. Glutamate 240 serves as the catalytic Proton donor. Cysteines 259 and 265 form a disulfide. Residues tyrosine 383, glutamate 456, tryptophan 504, 511–512, and phenylalanine 520 contribute to the a beta-D-glucoside site; that span reads EW. Residue glutamate 456 is the Nucleophile of the active site.

It belongs to the glycosyl hydrolase 1 family. As to quaternary structure, homohexamer. Expressed in seedlings, mesocotyl, coleoptile, leaf sheath, and roots.

It is found in the plastid. The protein localises to the chloroplast. It carries out the reaction DIMBOA beta-D-glucoside + H2O = DIMBOA + D-glucose. The enzyme catalyses DIBOA beta-D-glucoside + H2O = DIBOA + D-glucose. It catalyses the reaction Hydrolysis of terminal, non-reducing beta-D-glucosyl residues with release of beta-D-glucose.. Its activity is regulated as follows. Inhibited by castanospermine, Ag(+) and Cu(2+). 34% inhibition by Zn(2+) and not affected by EDTA. In terms of biological role, involved in defense of young plant parts against pests via the production of benzoxazolinones (hydroxamic acids) from hydroxamic acid glucosides. The preferred substrate is DIBOA-beta-D-glucoside. Can also use esculin and genistein glucoside as substrates, but no activity with salicin, p-nitrophenyl-alpha-glucoside or substrates related to cell wall components. This is 4-hydroxy-7-methoxy-3-oxo-3,4-dihydro-2H-1,4-benzoxazin-2-yl glucoside beta-D-glucosidase, chloroplastic from Secale cereale (Rye).